Consider the following 185-residue polypeptide: MEFRPVLITVRRDPGVNTGSLKVIAYDLHYDNIFDNCAVKSFRDTDTGFTVMKEYSTNSAFILSPYKLFSAVFNKEGEMISNDVGSSFRVYNIFSQMCKDINEISEIQRAGYLETYLGDGQADTDIFFDVLTNNKAKVRWLVNKDHSAWCGILNDLKWEESNKEKFKGRDILDTYVLSSDYPGFK.

This is Protein P21 from Vitis vinifera (Grape).